The following is a 342-amino-acid chain: UV excision repair protein RAD23 homolog (342 aa).

In terms of domain architecture, Ubiquitin-like spans 1–76 (MKVTIKNINK…IVMMIKKPRE (76 aa)). Positions 77–151 (APATTPAPST…TPGSTSTTSP (75 aa)) are enriched in low complexity. The tract at residues 77-157 (APATTPAPST…TTSPQQSSDF (81 aa)) is disordered. UBA domains are found at residues 161-201 (TELE…LVSG) and 297-338 (QEES…LFET).

Belongs to the RAD23 family.

Its subcellular location is the nucleus. The protein resides in the cytoplasm. May play a role both in proteasomal degradation of misfolded proteins and DNA repair. The sequence is that of UV excision repair protein RAD23 homolog (rcbA) from Dictyostelium discoideum (Social amoeba).